The primary structure comprises 199 residues: Inner membrane protein E199L (199 aa).

Residue Asn-131 is glycosylated (N-linked (GlcNAc...) asparagine; by host). Residues 150–170 traverse the membrane as a helical segment; sequence INVMNHPFLTLILIILILVII.

The protein belongs to the asfivirus E199L family. As to quaternary structure, interacts with host PYCR2; this interaction results in autophagy activation. Post-translationally, contains intramolecular disulfide bonds.

The protein resides in the virion membrane. Its subcellular location is the host membrane. In terms of biological role, essential for viral fusion with host endosomal membrane and core release. Not required for virus morphogenesis and egress. Induces complete autophagy through the interaction with and down-regulation of host PYCR2. The polypeptide is Inner membrane protein E199L (African swine fever virus (isolate Tick/Malawi/Lil 20-1/1983) (ASFV)).